A 279-amino-acid chain; its full sequence is Energy-coupling factor transporter ATP-binding protein EcfA2 (279 aa).

The 243-residue stretch at 3-245 (ITLKNVSYTY…LDFMESIQLG (243 aa)) folds into the ABC transporter domain. 40 to 47 (GHTGSGKS) provides a ligand contact to ATP.

It belongs to the ABC transporter superfamily. Energy-coupling factor EcfA family. Forms a stable energy-coupling factor (ECF) transporter complex composed of 2 membrane-embedded substrate-binding proteins (S component), 2 ATP-binding proteins (A component) and 2 transmembrane proteins (T component).

The protein localises to the cell membrane. Functionally, ATP-binding (A) component of a common energy-coupling factor (ECF) ABC-transporter complex. Unlike classic ABC transporters this ECF transporter provides the energy necessary to transport a number of different substrates. The protein is Energy-coupling factor transporter ATP-binding protein EcfA2 of Streptococcus sanguinis (strain SK36).